Here is a 342-residue protein sequence, read N- to C-terminus: Holliday junction branch migration complex subunit RuvB (342 aa).

The large ATPase domain (RuvB-L) stretch occupies residues 1 to 184 (MEEDFNIRDH…FGINLHLEYY (184 aa)). Residues L23, R24, G65, K68, T69, T70, 131 to 133 (EDY), R174, Y184, and R221 contribute to the ATP site. T69 is a binding site for Mg(2+). The interval 185-255 (DDDILSNIIS…IANYALEALN (71 aa)) is small ATPAse domain (RuvB-S). The interval 258 to 342 (KYGLDEIDNK…YNSQKTLFND (85 aa)) is head domain (RuvB-H). Residues R313 and R318 each coordinate DNA.

The protein belongs to the RuvB family. In terms of assembly, homohexamer. Forms an RuvA(8)-RuvB(12)-Holliday junction (HJ) complex. HJ DNA is sandwiched between 2 RuvA tetramers; dsDNA enters through RuvA and exits via RuvB. An RuvB hexamer assembles on each DNA strand where it exits the tetramer. Each RuvB hexamer is contacted by two RuvA subunits (via domain III) on 2 adjacent RuvB subunits; this complex drives branch migration. In the full resolvosome a probable DNA-RuvA(4)-RuvB(12)-RuvC(2) complex forms which resolves the HJ.

It localises to the cytoplasm. The enzyme catalyses ATP + H2O = ADP + phosphate + H(+). Functionally, the RuvA-RuvB-RuvC complex processes Holliday junction (HJ) DNA during genetic recombination and DNA repair, while the RuvA-RuvB complex plays an important role in the rescue of blocked DNA replication forks via replication fork reversal (RFR). RuvA specifically binds to HJ cruciform DNA, conferring on it an open structure. The RuvB hexamer acts as an ATP-dependent pump, pulling dsDNA into and through the RuvAB complex. RuvB forms 2 homohexamers on either side of HJ DNA bound by 1 or 2 RuvA tetramers; 4 subunits per hexamer contact DNA at a time. Coordinated motions by a converter formed by DNA-disengaged RuvB subunits stimulates ATP hydrolysis and nucleotide exchange. Immobilization of the converter enables RuvB to convert the ATP-contained energy into a lever motion, pulling 2 nucleotides of DNA out of the RuvA tetramer per ATP hydrolyzed, thus driving DNA branch migration. The RuvB motors rotate together with the DNA substrate, which together with the progressing nucleotide cycle form the mechanistic basis for DNA recombination by continuous HJ branch migration. Branch migration allows RuvC to scan DNA until it finds its consensus sequence, where it cleaves and resolves cruciform DNA. The polypeptide is Holliday junction branch migration complex subunit RuvB (Bacteroides fragilis (strain ATCC 25285 / DSM 2151 / CCUG 4856 / JCM 11019 / LMG 10263 / NCTC 9343 / Onslow / VPI 2553 / EN-2)).